The chain runs to 526 residues: MSKKATYPKVMCTQHPDSASKYISTQEEPGEAIEAAVVFGCDEYMPDYEGKATPYHQNVQIVSRFIEETDLIPGKDIFITPRAPSAAQENRFRQLMVMMSIAEANHGALEYSDVQAINEFVHPMTGTVGEILDAQQHMVDVGELAKKEFGVAMEVPRIIPLIEDAPALLHAKELAENTLLSWEKRFGAAPEKFRVFLGKSDSALSFGHVASTLSCKYAISGISELDLELDTSTGIIFGAGTLPFRGHLSLKNAENFFREYRGIGTITLQSAVRYSHDKGEAEALVRLAEERLPESPEIYSGEEKEEIVNLIGIFGARYNRIIREMSCTINQLAGLLPQQRDRLMHKGTGGYSRNVPDISGLVCLCRKDVGKELSASMPAEDLNLPRAIKFTGALYSIGLPPEFIGTGTALEEAREKLGEEACERLLKKYFPSLASDLSFASGYLDLNVASRFLPEACLKEIRKDIEVLRDTFSLKVQPEPSYRILLEMMQPDLLQAGTKGNCMDEEVSQLVCSTLTKMGKIRKALG.

It belongs to the PEPCase type 2 family. Homotetramer. The cofactor is Mg(2+).

It catalyses the reaction oxaloacetate + phosphate = phosphoenolpyruvate + hydrogencarbonate. Its function is as follows. Catalyzes the irreversible beta-carboxylation of phosphoenolpyruvate (PEP) to form oxaloacetate (OAA), a four-carbon dicarboxylic acid source for the tricarboxylic acid cycle. This is Phosphoenolpyruvate carboxylase from Methanosarcina mazei (strain ATCC BAA-159 / DSM 3647 / Goe1 / Go1 / JCM 11833 / OCM 88) (Methanosarcina frisia).